A 361-amino-acid polypeptide reads, in one-letter code: Phospho-N-acetylmuramoyl-pentapeptide-transferase (361 aa).

10 consecutive transmembrane segments (helical) span residues 25–45 (RGIL…PAVI), 73–93 (TMGG…WGDL), 98–118 (VWLV…DDWI), 139–159 (IFGL…AAIT), 168–188 (IALP…IVGF), 200–220 (GLAI…AYAS), 237–257 (AGEL…FLWF), 264–284 (VFMG…IAVI), 289–309 (MVLV…MIQV), and 339–359 (VIVR…ATLK).

This sequence belongs to the glycosyltransferase 4 family. MraY subfamily. Mg(2+) serves as cofactor.

The protein resides in the cell inner membrane. It catalyses the reaction UDP-N-acetyl-alpha-D-muramoyl-L-alanyl-gamma-D-glutamyl-meso-2,6-diaminopimeloyl-D-alanyl-D-alanine + di-trans,octa-cis-undecaprenyl phosphate = di-trans,octa-cis-undecaprenyl diphospho-N-acetyl-alpha-D-muramoyl-L-alanyl-D-glutamyl-meso-2,6-diaminopimeloyl-D-alanyl-D-alanine + UMP. It participates in cell wall biogenesis; peptidoglycan biosynthesis. Functionally, catalyzes the initial step of the lipid cycle reactions in the biosynthesis of the cell wall peptidoglycan: transfers peptidoglycan precursor phospho-MurNAc-pentapeptide from UDP-MurNAc-pentapeptide onto the lipid carrier undecaprenyl phosphate, yielding undecaprenyl-pyrophosphoryl-MurNAc-pentapeptide, known as lipid I. This Xanthomonas axonopodis pv. citri (strain 306) protein is Phospho-N-acetylmuramoyl-pentapeptide-transferase.